A 273-amino-acid chain; its full sequence is MSYLLDPSRKTITIPKLQAMRDAGEKIAMLTAYDSSFAALLDYCGVEMILVGDSLGNVMQGQQTTLPVTLEQMAYHTECAARGNQTSLLLTDLPFGTYPTPEAAFASAVTLMKAGAQMVKLEGGDWLAPIVKFLVERSIPVCAHIGLTPQSVHALGGFKVQGKTNAGAAQLKRDALALQAAGAQVVLMEAVPAALAGEITQSLTVPTIGIGAGADCSGQVLVLQDMLNVYPGRKAKFVRNFMDGQTSIEAAVRAYVAAVKDGSFPAAEHTFSA.

The Mg(2+) site is built by Asp-53 and Asp-92. 3-methyl-2-oxobutanoate is bound by residues 53–54 (DS), Asp-92, and Lys-120. Glu-122 contacts Mg(2+). Glu-189 serves as the catalytic Proton acceptor.

This sequence belongs to the PanB family. As to quaternary structure, homodecamer; pentamer of dimers. It depends on Mg(2+) as a cofactor.

The protein resides in the cytoplasm. The catalysed reaction is 3-methyl-2-oxobutanoate + (6R)-5,10-methylene-5,6,7,8-tetrahydrofolate + H2O = 2-dehydropantoate + (6S)-5,6,7,8-tetrahydrofolate. It functions in the pathway cofactor biosynthesis; (R)-pantothenate biosynthesis; (R)-pantoate from 3-methyl-2-oxobutanoate: step 1/2. Functionally, catalyzes the reversible reaction in which hydroxymethyl group from 5,10-methylenetetrahydrofolate is transferred onto alpha-ketoisovalerate to form ketopantoate. In Cupriavidus necator (strain ATCC 17699 / DSM 428 / KCTC 22496 / NCIMB 10442 / H16 / Stanier 337) (Ralstonia eutropha), this protein is 3-methyl-2-oxobutanoate hydroxymethyltransferase.